A 361-amino-acid polypeptide reads, in one-letter code: Protein RecA (361 aa).

ATP is bound at residue 77–84; that stretch reads GPESSGKT.

Belongs to the RecA family.

It is found in the cytoplasm. Its function is as follows. Can catalyze the hydrolysis of ATP in the presence of single-stranded DNA, the ATP-dependent uptake of single-stranded DNA by duplex DNA, and the ATP-dependent hybridization of homologous single-stranded DNAs. It interacts with LexA causing its activation and leading to its autocatalytic cleavage. In Sinorhizobium medicae (strain WSM419) (Ensifer medicae), this protein is Protein RecA.